The sequence spans 967 residues: Phosphoenolpyruvate carboxylase 2 (967 aa).

At Ser-13 the chain carries Phosphoserine. Active-site residues include His-174 and Lys-602.

This sequence belongs to the PEPCase type 1 family. As to quaternary structure, homotetramer. Mg(2+) is required as a cofactor.

The protein resides in the cytoplasm. The enzyme catalyses oxaloacetate + phosphate = phosphoenolpyruvate + hydrogencarbonate. Its pathway is photosynthesis; C3 acid pathway. Its activity is regulated as follows. By light-reversible phosphorylation. Its function is as follows. Through the carboxylation of phosphoenolpyruvate (PEP) it forms oxaloacetate, a four-carbon dicarboxylic acid source for the tricarboxylic acid cycle. In Zea mays (Maize), this protein is Phosphoenolpyruvate carboxylase 2 (PEP4).